Reading from the N-terminus, the 130-residue chain is Small ribosomal subunit protein uS9 (130 aa).

It belongs to the universal ribosomal protein uS9 family.

The chain is Small ribosomal subunit protein uS9 from Syntrophobacter fumaroxidans (strain DSM 10017 / MPOB).